Reading from the N-terminus, the 547-residue chain is Inositol 1,4,5-trisphosphate receptor-interacting protein-like 1 (547 aa).

An N-terminal signal peptide occupies residues 1-22 (MAVISLMFLAVMYVVHHPLMVS). The Extracellular portion of the chain corresponds to 23-96 (DRMDLDTLAR…PFQAGGQDGG (74 aa)). A coiled-coil region spans residues 28-66 (DTLARSRQLEKRMSEEMRQLEMEFEERSRAAEQKQKVEN). A helical transmembrane segment spans residues 97 to 117 (PLGWILGNLWNAGLFCLFLIF). Residues 118 to 547 (ELLRQSMQHE…LPCSPVAGGL (430 aa)) are Cytoplasmic-facing.

It belongs to the ITPRIP family.

Its subcellular location is the cell membrane. Functions as a ligand of CD3E, inhibiting TCR-CD3 complex signaling to regulate T cell activation. Induces stable CD3E-NCK1 binding, thereby preventing the CD3E-ZAP70 interaction and subsequently inhibiting the activation of the downstream ERK-NFkB signaling cascade and calcium influx. This chain is Inositol 1,4,5-trisphosphate receptor-interacting protein-like 1 (Itpripl1), found in Mus musculus (Mouse).